A 351-amino-acid polypeptide reads, in one-letter code: Phospho-N-acetylmuramoyl-pentapeptide-transferase (351 aa).

A run of 10 helical transmembrane segments spans residues 17-37 (TAYA…FIIL), 63-83 (IPTM…FFWI), 85-105 (LWNV…CLGF), 135-155 (ISVT…YFPF), 158-178 (SLKL…LISA), 190-210 (GLAI…AYLT), 230-250 (LVIF…FNAY), 254-274 (IMMG…TALI), 279-299 (ILFA…IIQV), and 328-348 (QVVI…LSTL).

It belongs to the glycosyltransferase 4 family. MraY subfamily. Requires Mg(2+) as cofactor.

It localises to the cell inner membrane. The enzyme catalyses UDP-N-acetyl-alpha-D-muramoyl-L-alanyl-gamma-D-glutamyl-meso-2,6-diaminopimeloyl-D-alanyl-D-alanine + di-trans,octa-cis-undecaprenyl phosphate = di-trans,octa-cis-undecaprenyl diphospho-N-acetyl-alpha-D-muramoyl-L-alanyl-D-glutamyl-meso-2,6-diaminopimeloyl-D-alanyl-D-alanine + UMP. The protein operates within cell wall biogenesis; peptidoglycan biosynthesis. In terms of biological role, catalyzes the initial step of the lipid cycle reactions in the biosynthesis of the cell wall peptidoglycan: transfers peptidoglycan precursor phospho-MurNAc-pentapeptide from UDP-MurNAc-pentapeptide onto the lipid carrier undecaprenyl phosphate, yielding undecaprenyl-pyrophosphoryl-MurNAc-pentapeptide, known as lipid I. The polypeptide is Phospho-N-acetylmuramoyl-pentapeptide-transferase (Borrelia hermsii (strain HS1 / DAH)).